A 424-amino-acid polypeptide reads, in one-letter code: F-box protein At2g38590 (424 aa).

The F-box domain occupies 2–47; that stretch reads TTMISNLPRVLIEEIFFRVPLKSLRAVRLTCKSWNTLSKSRSFRKL.

The sequence is that of F-box protein At2g38590 from Arabidopsis thaliana (Mouse-ear cress).